Reading from the N-terminus, the 84-residue chain is MTDKIRTLQGRVVSDKMEKSVVVAIDRMVKHPLYGKFIRRTTKLHVHDENNECGMGDVVEIRQTRPISKTKSWALVRVVEKAVL.

This sequence belongs to the universal ribosomal protein uS17 family. As to quaternary structure, part of the 30S ribosomal subunit.

In terms of biological role, one of the primary rRNA binding proteins, it binds specifically to the 5'-end of 16S ribosomal RNA. This chain is Small ribosomal subunit protein uS17, found in Proteus mirabilis (strain HI4320).